Here is a 237-residue protein sequence, read N- to C-terminus: Small ribosomal subunit protein uS3 (237 aa).

The 70-residue stretch at 17–86 (VERHLGHELK…SPQIEVQQVD (70 aa)) folds into the KH type-2 domain.

It belongs to the universal ribosomal protein uS3 family. In terms of assembly, part of the 30S ribosomal subunit.

Binds the lower part of the 30S subunit head. This chain is Small ribosomal subunit protein uS3, found in Methanospirillum hungatei JF-1 (strain ATCC 27890 / DSM 864 / NBRC 100397 / JF-1).